The chain runs to 567 residues: Unguisins hydrolase ungD (567 aa).

It belongs to the peptidase S12 family.

It participates in secondary metabolite biosynthesis. Functionally, hydrolase; part of the gene cluster that mediates the biosynthesis of the unguisins, gamma-aminobutyric acid (GABA)-containing fungal cyclic heptapeptides with the amino acid sequence cyclo-(D-Ala1-D-Val2-L-Phe3-D-Val4-D-Ala5-D-Trp6-GABA7) for unguisin A and cyclo-(D-Ala1-D-Val2-L-Leu3-D-Val4-D-Ala5-D-Trp6-GABA7) for unguisin B. Within the pathway, the hydrolase ungD catalyzes the hydrolysis between the D-tryptophan and GABA residues of unguisins A and B to produce the corresponding linear peptides. The alanine racemase ungC catalyzes the interconversion of L-alanine and D-alanine, providing the D-alanine which is accepted by the first adenylation domain of the nonribosomal peptide synthetase (NRPS) ungA. UngA is the main enzyme within the cluster which condenses the 7 residues using its respective 7 modules. The terminal condensation domain (Ct) is involved in cyclization with D-alanine and thereby releasing of unguisins A and B. This chain is Unguisins hydrolase ungD, found in Aspergillus violaceofuscus (strain CBS 115571).